The chain runs to 258 residues: 5'-nucleotidase SurE (258 aa).

A divalent metal cation-binding residues include D18, D19, S49, and N102.

Belongs to the SurE nucleotidase family. A divalent metal cation serves as cofactor.

Its subcellular location is the cytoplasm. It catalyses the reaction a ribonucleoside 5'-phosphate + H2O = a ribonucleoside + phosphate. Nucleotidase that shows phosphatase activity on nucleoside 5'-monophosphates. The sequence is that of 5'-nucleotidase SurE from Vibrio parahaemolyticus serotype O3:K6 (strain RIMD 2210633).